The following is a 444-amino-acid chain: Abhydrolase domain-containing protein abhd-5.2 (444 aa).

Residues 162-409 form the AB hydrolase-1 domain; sequence PIVLIHGFGA…SAGHHVYADD (248 aa).

This sequence belongs to the peptidase S33 family. ABHD4/ABHD5 subfamily. In terms of assembly, interacts with atgl-1; the interaction tethers atgl-1 to lipid droplets. In terms of tissue distribution, expressed in the hypodermis and intestine.

Its subcellular location is the lipid droplet. Acts coordinately with phospholipase atgl-1 within the lipolytic cascade to distribute stored energy to tissues to maintain energy levels during the dauer phase. Localizes atgl-1 to lipid droplets, possibly to facilitate triglyceride hydrolysis. Regulates lipid droplet size, lipid content, the exchange of lipids between lipid droplets and fusion of lipid droplets during the dauer phase. In Caenorhabditis elegans, this protein is Abhydrolase domain-containing protein abhd-5.2.